Reading from the N-terminus, the 142-residue chain is Transcriptional regulator MraZ (142 aa).

2 SpoVT-AbrB domains span residues 5–51 (ASAL…PRPE) and 77–120 (AADV…DAAT).

The protein belongs to the MraZ family. In terms of assembly, forms oligomers.

It is found in the cytoplasm. The protein resides in the nucleoid. This is Transcriptional regulator MraZ from Cupriavidus pinatubonensis (strain JMP 134 / LMG 1197) (Cupriavidus necator (strain JMP 134)).